The following is a 164-amino-acid chain: ATP synthase subunit b (164 aa).

The chain crosses the membrane as a helical span at residues 8-28; sequence FGIIFWQTITLLFVLFILGKF.

The protein belongs to the ATPase B chain family. F-type ATPases have 2 components, F(1) - the catalytic core - and F(0) - the membrane proton channel. F(1) has five subunits: alpha(3), beta(3), gamma(1), delta(1), epsilon(1). F(0) has three main subunits: a(1), b(2) and c(10-14). The alpha and beta chains form an alternating ring which encloses part of the gamma chain. F(1) is attached to F(0) by a central stalk formed by the gamma and epsilon chains, while a peripheral stalk is formed by the delta and b chains.

The protein resides in the cell membrane. Its function is as follows. F(1)F(0) ATP synthase produces ATP from ADP in the presence of a proton or sodium gradient. F-type ATPases consist of two structural domains, F(1) containing the extramembraneous catalytic core and F(0) containing the membrane proton channel, linked together by a central stalk and a peripheral stalk. During catalysis, ATP synthesis in the catalytic domain of F(1) is coupled via a rotary mechanism of the central stalk subunits to proton translocation. In terms of biological role, component of the F(0) channel, it forms part of the peripheral stalk, linking F(1) to F(0). In Amoebophilus asiaticus (strain 5a2), this protein is ATP synthase subunit b.